A 208-amino-acid chain; its full sequence is Interleukin-6 (208 aa).

The first 29 residues, 1-29, serve as a signal peptide directing secretion; the sequence is MNSLFTSAFSPLAVSLGLLLVMTSAFPTP. An N-linked (GlcNAc...) asparagine glycan is attached at N38. C72 and C78 are oxidised to a cystine. The residue at position 81 (S81) is a Phosphoserine. C101 and C111 form a disulfide bridge.

Belongs to the IL-6 superfamily. As to quaternary structure, component of a hexamer of two molecules each of IL6, IL6R and IL6ST; first binds to IL6R to associate with the signaling subunit IL6ST. Interacts with IL6R (via the N-terminal ectodomain); this interaction may be affected by IL6R-binding with SORL1, hence decreasing IL6 cis signaling. Interacts with SORL1 (via the N-terminal ectodomain); this interaction leads to IL6 internalization and lysosomal degradation. May form a trimeric complex with the soluble SORL1 ectodomain and soluble IL6R receptor; this interaction might stabilize circulating IL6, hence promoting IL6 trans signaling.

Its subcellular location is the secreted. Its function is as follows. Cytokine with a wide variety of biological functions in immunity, tissue regeneration, and metabolism. Binds to IL6R, then the complex associates to the signaling subunit IL6ST/gp130 to trigger the intracellular IL6-signaling pathway. The interaction with the membrane-bound IL6R and IL6ST stimulates 'classic signaling', whereas the binding of IL6 and soluble IL6R to IL6ST stimulates 'trans-signaling'. Alternatively, 'cluster signaling' occurs when membrane-bound IL6:IL6R complexes on transmitter cells activate IL6ST receptors on neighboring receiver cells. IL6 is a potent inducer of the acute phase response. Rapid production of IL6 contributes to host defense during infection and tissue injury, but excessive IL6 synthesis is involved in disease pathology. In the innate immune response, is synthesized by myeloid cells, such as macrophages and dendritic cells, upon recognition of pathogens through toll-like receptors (TLRs) at the site of infection or tissue injury. In the adaptive immune response, is required for the differentiation of B cells into immunoglobulin-secreting cells. Plays a major role in the differentiation of CD4(+) T cell subsets. Essential factor for the development of T follicular helper (Tfh) cells that are required for the induction of germinal-center formation. Required to drive naive CD4(+) T cells to the Th17 lineage. Also required for proliferation of myeloma cells and the survival of plasmablast cells. Functionally, acts as an essential factor in bone homeostasis and on vessels directly or indirectly by induction of VEGF, resulting in increased angiogenesis activity and vascular permeability. Induces, through 'trans-signaling' and synergistically with IL1B and TNF, the production of VEGF. Involved in metabolic controls, is discharged into the bloodstream after muscle contraction increasing lipolysis and improving insulin resistance. 'Trans-signaling' in central nervous system also regulates energy and glucose homeostasis. Mediates, through GLP-1, crosstalk between insulin-sensitive tissues, intestinal L cells and pancreatic islets to adapt to changes in insulin demand. Also acts as a myokine. Plays a protective role during liver injury, being required for maintenance of tissue regeneration. Also has a pivotal role in iron metabolism by regulating HAMP/hepcidin expression upon inflammation or bacterial infection. Through activation of IL6ST-YAP-NOTCH pathway, induces inflammation-induced epithelial regeneration. The chain is Interleukin-6 (IL6) from Capra hircus (Goat).